Consider the following 238-residue polypeptide: Ubiquitin-conjugating enzyme E2 R2 (238 aa).

The region spanning 8-174 (SSQKALMLEL…IRKQVSATKA (167 aa)) is the UBC core domain. Cysteine 93 acts as the Glycyl thioester intermediate in catalysis. Residues 98–113 (HPPVDDPQSGELPSER) form an important for ubiquitin transfer region. The interval 194–238 (TKVPSNDNSSDLLYDDLYDDDIDDEDEEEEDADCYDDDDSGNEES) is disordered. A compositionally biased stretch (acidic residues) spans 206-238 (LYDDLYDDDIDDEDEEEEDADCYDDDDSGNEES). Serine 233 is modified (phosphoserine; by CK2).

This sequence belongs to the ubiquitin-conjugating enzyme family. As to quaternary structure, interacts with multiple Cul1-RING E3 ubiquitin-protein ligase complexes, also known as SCF (SKP1-CUL1-F-box protein) complexes, including SCF(FBXW7) and SCF(BTRC). Interacts with multiple Cul2-RING (CRL2) E3 ubiquitin-protein ligase complexes, also known as ECS (Elongin BC-CUL2/5-SOCS-box protein) complexes, including CRL2(FEM1C) and ECS(VHL). When phosphorylated, interacts with beta-TrCP (BTRC).

The catalysed reaction is S-ubiquitinyl-[E1 ubiquitin-activating enzyme]-L-cysteine + [E2 ubiquitin-conjugating enzyme]-L-cysteine = [E1 ubiquitin-activating enzyme]-L-cysteine + S-ubiquitinyl-[E2 ubiquitin-conjugating enzyme]-L-cysteine.. The protein operates within protein modification; protein ubiquitination. With respect to regulation, neddylation of CUL2 in the CRL2(FEM1C) E3 ligase complex increases substrate affinity of UBE2R2 and the ubiquitin-transfer rate in the E2-E3 complex. E2 ubiquitin-conjugating enzyme that accepts ubiquitin from an E1 ubiquitin-activating protein, and catalyzes its covalent attachment to other proteins by an E3 ubiquitin-protein ligase complex. In vitro catalyzes monoubiquitination and 'Lys-48'-linked polyubiquitination. Works in collaboration with various Cul1-RING and Cul2-RING E3 ligase complexes. May be involved in degradation of katenin. In Homo sapiens (Human), this protein is Ubiquitin-conjugating enzyme E2 R2 (UBE2R2).